The sequence spans 424 residues: Exodeoxyribonuclease 7 large subunit (424 aa).

The protein belongs to the XseA family. In terms of assembly, heterooligomer composed of large and small subunits.

The protein localises to the cytoplasm. It carries out the reaction Exonucleolytic cleavage in either 5'- to 3'- or 3'- to 5'-direction to yield nucleoside 5'-phosphates.. In terms of biological role, bidirectionally degrades single-stranded DNA into large acid-insoluble oligonucleotides, which are then degraded further into small acid-soluble oligonucleotides. The chain is Exodeoxyribonuclease 7 large subunit from Cyanothece sp. (strain PCC 7425 / ATCC 29141).